The following is a 709-amino-acid chain: Catalase HPII (709 aa).

Over residues 1 to 26 the composition is skewed to polar residues; it reads MSEQNNEQRSQAAGTDTVDRGNSNAK. The disordered stretch occupies residues 1–32; sequence MSEQNNEQRSQAAGTDTVDRGNSNAKLEQLEA. Catalysis depends on residues His90 and Asn163. Tyr377 lines the heme pocket. Positions 419 to 443 are disordered; that stretch reads RASYEPNSIDGGWPKETPPAARNGG.

It belongs to the catalase family. HPII subfamily. Heme is required as a cofactor.

Its subcellular location is the cytoplasm. The catalysed reaction is 2 H2O2 = O2 + 2 H2O. Decomposes hydrogen peroxide into water and oxygen; serves to protect cells from the toxic effects of hydrogen peroxide. This is Catalase HPII (katE) from Pseudomonas aeruginosa (strain ATCC 15692 / DSM 22644 / CIP 104116 / JCM 14847 / LMG 12228 / 1C / PRS 101 / PAO1).